Reading from the N-terminus, the 744-residue chain is FHF complex subunit HOOK-interacting protein 2B (744 aa).

Disordered regions lie at residues 184–213 and 510–530; these read KTAR…LNRD and LDSG…SSDG. Residues 197–213 are compositionally biased toward basic and acidic residues; that stretch reads AGYRDKDCPHSDALNRD.

The protein belongs to the FHIP family. As to expression, expressed in colon.

In terms of biological role, able to activate MAPK/ERK and TGFB signaling pathways. May regulate the activity of genes involved in intestinal barrier function and immunoprotective inflammation. May play a role in cell proliferation. This is FHF complex subunit HOOK-interacting protein 2B from Mus musculus (Mouse).